Here is a 105-residue protein sequence, read N- to C-terminus: Transmembrane protein 273 (105 aa).

A signal peptide spans 1 to 19; it reads MNLGVSMLRILFLLDVGGA. Topologically, residues 20-38 are extracellular; the sequence is QVLATGKTPGAEIDFKYAL. A helical membrane pass occupies residues 39–59; sequence IGTAVGVAISAGFLALKICMI. The Cytoplasmic portion of the chain corresponds to 60–105; the sequence is RRHLFDDDSSDLKSTPGGLSDTIPLKKRAPRRNHNFSKRDAQVIEL.

The protein resides in the membrane. The polypeptide is Transmembrane protein 273 (Homo sapiens (Human)).